Reading from the N-terminus, the 601-residue chain is Molybdenum cofactor synthesis protein cinnamon (601 aa).

The segment at 3-153 (SITFGVLTIS…TISALLPHAV (151 aa)) is MPT adenylyltransferase. A disordered region spans residues 173-195 (SAQKSHICPHKTGTGTDSDRNSP). Residues 184–596 (TGTGTDSDRN…FPASVLRFDF (413 aa)) are MPT Mo-transferase. S376 carries the phosphoserine modification.

In the N-terminal section; belongs to the MoaB/Mog family. The protein in the C-terminal section; belongs to the MoeA family. The cofactor is Mg(2+).

It catalyses the reaction molybdopterin + ATP + H(+) = adenylyl-molybdopterin + diphosphate. It carries out the reaction adenylyl-molybdopterin + molybdate = Mo-molybdopterin + AMP + H(+). It participates in cofactor biosynthesis; molybdopterin biosynthesis. In terms of biological role, catalyzes two steps in the biosynthesis of the molybdenum cofactor. In the first step, molybdopterin is adenylated. Subsequently, molybdate is inserted into adenylated molybdopterin and AMP is released. The polypeptide is Molybdenum cofactor synthesis protein cinnamon (cin) (Drosophila melanogaster (Fruit fly)).